Consider the following 262-residue polypeptide: tRNA pseudouridine synthase A (262 aa).

The active-site Nucleophile is D51. Residue Y109 participates in substrate binding.

It belongs to the tRNA pseudouridine synthase TruA family. Homodimer.

It catalyses the reaction uridine(38/39/40) in tRNA = pseudouridine(38/39/40) in tRNA. Formation of pseudouridine at positions 38, 39 and 40 in the anticodon stem and loop of transfer RNAs. The protein is tRNA pseudouridine synthase A of Glaesserella parasuis serovar 5 (strain SH0165) (Haemophilus parasuis).